The chain runs to 209 residues: tRNA (guanine-N(7)-)-methyltransferase (209 aa).

S-adenosyl-L-methionine is bound by residues D35, E60, N87, and D113. The active site involves D113. 2 residues coordinate substrate: K117 and D149.

Belongs to the class I-like SAM-binding methyltransferase superfamily. TrmB family.

It carries out the reaction guanosine(46) in tRNA + S-adenosyl-L-methionine = N(7)-methylguanosine(46) in tRNA + S-adenosyl-L-homocysteine. Its pathway is tRNA modification; N(7)-methylguanine-tRNA biosynthesis. Catalyzes the formation of N(7)-methylguanine at position 46 (m7G46) in tRNA. This Prochlorococcus marinus (strain MIT 9215) protein is tRNA (guanine-N(7)-)-methyltransferase.